Consider the following 594-residue polypeptide: Ferredoxin--nitrite reductase, chloroplastic (594 aa).

A chloroplast-targeting transit peptide spans 1 to 32 (MASLPVNKIIPSSTTLLSSSNNNRRRNNSSIR). Over residues 13-22 (STTLLSSSNN) the composition is skewed to low complexity. The interval 13 to 36 (STTLLSSSNNNRRRNNSSIRCQKA) is disordered. Cys473, Cys479, Cys514, and Cys518 together coordinate [4Fe-4S] cluster. Cys518 provides a ligand contact to siroheme.

This sequence belongs to the nitrite and sulfite reductase 4Fe-4S domain family. Monomer. Requires siroheme as cofactor. The cofactor is [4Fe-4S] cluster.

It is found in the plastid. The protein resides in the chloroplast. It carries out the reaction 6 oxidized [2Fe-2S]-[ferredoxin] + NH4(+) + 2 H2O = nitrite + 6 reduced [2Fe-2S]-[ferredoxin] + 8 H(+). Its pathway is nitrogen metabolism; nitrate reduction (assimilation). The protein is Ferredoxin--nitrite reductase, chloroplastic (NIR) of Spinacia oleracea (Spinach).